Consider the following 322-residue polypeptide: Replication factor C small subunit (322 aa).

45-52 (GPPGVGKT) contributes to the ATP binding site.

It belongs to the activator 1 small subunits family. RfcS subfamily. As to quaternary structure, heteromultimer composed of small subunits (RfcS) and large subunits (RfcL).

In terms of biological role, part of the RFC clamp loader complex which loads the PCNA sliding clamp onto DNA. This Methanocella arvoryzae (strain DSM 22066 / NBRC 105507 / MRE50) protein is Replication factor C small subunit.